The sequence spans 207 residues: Large ribosomal subunit protein uL4 (207 aa).

The interval T48–A75 is disordered.

Belongs to the universal ribosomal protein uL4 family. Part of the 50S ribosomal subunit.

Its function is as follows. One of the primary rRNA binding proteins, this protein initially binds near the 5'-end of the 23S rRNA. It is important during the early stages of 50S assembly. It makes multiple contacts with different domains of the 23S rRNA in the assembled 50S subunit and ribosome. Functionally, forms part of the polypeptide exit tunnel. This Leuconostoc citreum (strain KM20) protein is Large ribosomal subunit protein uL4.